Here is a 1126-residue protein sequence, read N- to C-terminus: [F-actin]-monooxygenase mical2 (1126 aa).

The monooxygenase domain stretch occupies residues 2-494; it reads GENGDDKHGR…KHLFITNELQ (493 aa). Residues C97, 116–118, 123–125, F183, Y299, and D399 each bind FAD; these read EKR and RNN. Residues 516–619 enclose the Calponin-homology (CH) domain; it reads DVRPNKLLIW…MVLYLSKFYE (104 aa). The Nuclear localization signal signature appears at 659–680; that stretch reads RKRVPKDEKTSDDSDLNKRRKT. Disordered regions lie at residues 748-830 and 892-935; these read AVTA…SLSS and PSLG…SGMS. Positions 792 to 803 are enriched in pro residues; the sequence is VRPPVQPRPGPA. Over residues 805–824 the composition is skewed to basic and acidic residues; the sequence is PTRELRVVERAQSHPDDLGR. The segment covering 918–932 has biased composition (low complexity); the sequence is SSSDSSPSSAPSRKS. The region spanning 1001 to 1063 is the LIM zinc-binding domain; sequence DTCYFCKRRV…QPHFMHSVTK (63 aa). C1003, C1006, H1024, C1027, C1030, C1033, C1053, and H1056 together coordinate Zn(2+).

Belongs to the Mical family. Requires FAD as cofactor.

It is found in the nucleus. Its subcellular location is the cytoplasm. It catalyses the reaction L-methionyl-[F-actin] + NADPH + O2 + H(+) = L-methionyl-(R)-S-oxide-[F-actin] + NADP(+) + H2O. In terms of biological role, nuclear monooxygenase that promotes depolymerization of F-actin by mediating oxidation of specific methionine residues on actin and regulates the srf signaling. Acts by modifying nuclear actin subunits through the addition of oxygen to form methionine-sulfoxide, leading to promote actin filament severing and prevent repolymerization. Acts as a key regulator of the srf signaling pathway elicited by nerve growth factor and serum: mediates oxidation and subsequent depolymerization of nuclear actin, leading to increase mkl1/mrtf-a presence in the nucleus and promote srf:mkl1/mrtf-a-dependent gene transcription. The polypeptide is [F-actin]-monooxygenase mical2 (Xenopus tropicalis (Western clawed frog)).